The sequence spans 556 residues: Arginine--tRNA ligase 2 (556 aa).

A 'HIGH' region motif is present at residues 132 to 142; that stretch reads ANPTGDLHLGH.

Belongs to the class-I aminoacyl-tRNA synthetase family. Monomer.

The protein resides in the cytoplasm. It carries out the reaction tRNA(Arg) + L-arginine + ATP = L-arginyl-tRNA(Arg) + AMP + diphosphate. This chain is Arginine--tRNA ligase 2, found in Bacillus thuringiensis subsp. konkukian (strain 97-27).